Reading from the N-terminus, the 174-residue chain is MTFNFISFCRIEVILPCQIYSNTSIPLIWKIVLLGDGSFTRHCQIITYRDTEINHISTSIYSKVHNSPQFYVNRRVWIGNNLKNKLIFASSWWNIESYQAIYKYPSRAIGSLFIQSDLDYYRDIHCLFLGYSTELENLFLVPGPFWGRYYTLFYKGKPISLIYEIFSPLLENFQ.

The protein belongs to the ycf21 family.

It is found in the plastid. The protein resides in the chloroplast. This is an uncharacterized protein from Pyropia yezoensis (Susabi-nori).